The following is a 133-amino-acid chain: Small ribosomal subunit protein uS8 (133 aa).

It belongs to the universal ribosomal protein uS8 family. In terms of assembly, part of the 30S ribosomal subunit. Contacts proteins S5 and S12.

Its function is as follows. One of the primary rRNA binding proteins, it binds directly to 16S rRNA central domain where it helps coordinate assembly of the platform of the 30S subunit. This chain is Small ribosomal subunit protein uS8, found in Chloroflexus aggregans (strain MD-66 / DSM 9485).